We begin with the raw amino-acid sequence, 88 residues long: Large ribosomal subunit protein bL27 (88 aa).

The interval 1–21 is disordered; sequence MAHKKGASSSRNGRDSAAQRL.

It belongs to the bacterial ribosomal protein bL27 family.

The sequence is that of Large ribosomal subunit protein bL27 from Mycobacterium sp. (strain MCS).